Reading from the N-terminus, the 1047-residue chain is UPF0182 protein Mlut_14990 (1047 aa).

2 stretches are compositionally biased toward gly residues: residues 1–27 and 49–59; these read MSFGQGGGGPFGGPPRDGGGTAGGQSG and GPGGPFGGGGS. Residues 1 to 66 are disordered; that stretch reads MSFGQGGGGP…GGSSAARGRG (66 aa). 7 helical membrane passes run 71–91, 114–134, 168–188, 214–234, 266–286, 314–334, and 341–361; these read PSALVLTIIAVAVLVGLFVVF, VLAKGALFLIAGLGMALAVWL, LVFLGVPLVLGVFAGSTAMNG, FFMATLPFLTLVVGYLISVVL, AHIGITLAVFLLLQGVNFWLN, AILAVTAVIVAGLFVWTVVSG, and IGTAVLVITALVVGTAYPFIV. Disordered regions lie at residues 544–568, 941–965, and 1007–1047; these read GAPAVERDRPQTADSQEDTAYTFSG, GDSGAVTPEEKQAEAPAPGEKPTAP, and EALK…TPSG. The segment covering 555 to 565 has biased composition (polar residues); that stretch reads TADSQEDTAYT. Low complexity predominate over residues 1015–1037; sequence ADDALGGDAPAQEQAPAEASPAP. Residues 1038–1047 show a composition bias toward pro residues; the sequence is SSSPSPTPSG.

It belongs to the UPF0182 family.

Its subcellular location is the cell membrane. In Micrococcus luteus (strain ATCC 4698 / DSM 20030 / JCM 1464 / CCM 169 / CCUG 5858 / IAM 1056 / NBRC 3333 / NCIMB 9278 / NCTC 2665 / VKM Ac-2230) (Micrococcus lysodeikticus), this protein is UPF0182 protein Mlut_14990.